The primary structure comprises 223 residues: Glutathione S-transferase A1 (223 aa).

N-acetylmethionine is present on Met-1. An N-acetylalanine; in Glutathione S-transferase A1, N-terminally processed modification is found at Ala-2. In terms of domain architecture, GST N-terminal spans 3-83 (GKPVLHYFNA…YIATKYDLYG (81 aa)). Lys-4 carries the N6-succinyllysine modification. Glutathione-binding positions include Tyr-9, Lys-45, 54–55 (QV), and 67–68 (QT). The GST C-terminal domain maps to 85–208 (DMKERALIDM…QPGSQRKPPM (124 aa)).

This sequence belongs to the GST superfamily. Alpha family. As to quaternary structure, homodimer. As to expression, expressed in the liver, skin and kidney.

The catalysed reaction is RX + glutathione = an S-substituted glutathione + a halide anion + H(+). The enzyme catalyses prostaglandin A2 + glutathione = prostaglandin A2-S-(R)-glutathione. It carries out the reaction prostaglandin J2 + glutathione = prostaglandin J2-S-(R)-glutathione. It catalyses the reaction (13S)-hydroperoxy-(9Z,11E)-octadecadienoate + 2 glutathione = (13S)-hydroxy-(9Z,11E)-octadecadienoate + glutathione disulfide + H2O. The catalysed reaction is androst-5-ene-3,17-dione = androst-4-ene-3,17-dione. Its function is as follows. Glutathione S-transferase that catalyzes the nucleophilic attack of the sulfur atom of glutathione on the electrophilic groups of a wide range of exogenous and endogenous compounds. Involved in the formation of glutathione conjugates of both prostaglandin A2 (PGA2) and prostaglandin J2 (PGJ2). It also catalyzes the isomerization of D5-androstene-3,17-dione (AD) into D4-androstene-3,17-dione and may therefore play an important role in hormone biosynthesis. Through its glutathione-dependent peroxidase activity toward the fatty acid hydroperoxide (13S)-hydroperoxy-(9Z,11E)-octadecadienoate/13-HPODE it is also involved in the metabolism of oxidized linoleic acid. This chain is Glutathione S-transferase A1 (Gsta1), found in Mus musculus (Mouse).